The following is a 144-amino-acid chain: Bacilliredoxin BCE33L1972 (144 aa).

This sequence belongs to the bacilliredoxin family.

This Bacillus cereus (strain ZK / E33L) protein is Bacilliredoxin BCE33L1972.